A 239-amino-acid chain; its full sequence is Ribosomal RNA small subunit methyltransferase G (239 aa).

S-adenosyl-L-methionine-binding positions include Gly77, Phe82, 128 to 129 (AE), and Arg146. Positions 215–239 (DKKRQTPKKYPRKPGTPNKTPLLEK) are disordered.

Belongs to the methyltransferase superfamily. RNA methyltransferase RsmG family.

The protein localises to the cytoplasm. Specifically methylates the N7 position of guanine in position 535 of 16S rRNA. This chain is Ribosomal RNA small subunit methyltransferase G, found in Staphylococcus aureus (strain bovine RF122 / ET3-1).